The chain runs to 316 residues: MLPSSIQISGEPLSGAEVRDICRGLRDNAVRLLSLRGCRLCDRDFGRICRALAGATSLAQLNLNLGVVSSPSRIKQLAEALRTNRSIQSLFLHGSPLTDAGLALLNPALALHPALVALDLGDCMLGDEAINLICGLLPPDGAKSGLKELTLSANPGITPKGWSRLAIAVAHSSQVRVLNLDYNPLGDHVAGMLAVAVASSRTLEVLDLEGTGLTNQSAQTLLDMVENYPTALRSLVLAENSISPELQQQICDLLSEGEEEEEMAGGAADTQEWGRGREPAAHQRGGSSWKCPSDPNSQMVLMTSGLGDSLLAETEM.

7 LRR repeats span residues serine 57–alanine 78, serine 86–asparagine 106, alanine 114–leucine 137, glycine 145–alanine 166, glutamine 174–aspartate 187, threonine 202–aspartate 223, and alanine 231–isoleucine 250. The interval glycine 257–asparagine 296 is disordered. Positions glutamate 272–alanine 281 are enriched in basic and acidic residues.

The protein is Leucine-rich repeat-containing protein 73 (Lrrc73) of Rattus norvegicus (Rat).